Reading from the N-terminus, the 475-residue chain is MSPLTETKAGTGFKAGVKDYRLTYYTPEYETKDTDILAAFRMTPQPGVPPEEAGAAVAAESSTGTWTTVWTDGLTSLDRYKGRCYDIEPVAGEDNQYIAYVAYPLDLFEEVSVTNLFTSIVGNVFGFKALRALRLEDLRIPPAYSKTFQGPPHGIQVERDKLNKYGRPLLGCTIKPKLGLSAKNYGRAVYECLRGGLDFTKDDENVNSQPFMRWRDRFLFVAEAIFKSQAETGEIKGHYLNATAGTSEEMMKRAQFARELGVPIIMHDYLTGGFTSNTSLSHYCRDNGLLLHIHRAMHAVIDRQKNHGIHFRVLAKALRMSGGDHIHSGTVVGKLEGEREVTLGFVDLLRDDYIEKDRSRGIYFTQDWVSMPGVLPVASGGIHVWHMPALTEIFGDDSVLQFGGGTLGHPWGNAPGAVANRVALEACVQARNEGRDLARQGNDIIREACKWSPELAAACEVWKEIKFEFETIDTL.

Residues M1–S2 constitute a propeptide that is removed on maturation. P3 bears the N-acetylproline mark. Residue K14 is modified to N6,N6,N6-trimethyllysine. Substrate is bound by residues N123 and T173. The active-site Proton acceptor is the K175. K177 serves as a coordination point for substrate. Mg(2+) is bound by residues K201, D203, and E204. An N6-carboxylysine modification is found at K201. H294 serves as the catalytic Proton acceptor. Substrate-binding residues include R295, H327, and S379.

Belongs to the RuBisCO large chain family. Type I subfamily. Heterohexadecamer of 8 large chains and 8 small chains. The cofactor is Mg(2+).

It is found in the plastid. It localises to the chloroplast. The catalysed reaction is 2 (2R)-3-phosphoglycerate + 2 H(+) = D-ribulose 1,5-bisphosphate + CO2 + H2O. It catalyses the reaction D-ribulose 1,5-bisphosphate + O2 = 2-phosphoglycolate + (2R)-3-phosphoglycerate + 2 H(+). Functionally, ruBisCO catalyzes two reactions: the carboxylation of D-ribulose 1,5-bisphosphate, the primary event in carbon dioxide fixation, as well as the oxidative fragmentation of the pentose substrate in the photorespiration process. Both reactions occur simultaneously and in competition at the same active site. The chain is Ribulose bisphosphate carboxylase large chain from Coleochaete orbicularis (Charophycean green alga).